Reading from the N-terminus, the 556-residue chain is Formate--tetrahydrofolate ligase (556 aa).

64-71 (TPAGEGKT) lines the ATP pocket.

The protein belongs to the formate--tetrahydrofolate ligase family.

The catalysed reaction is (6S)-5,6,7,8-tetrahydrofolate + formate + ATP = (6R)-10-formyltetrahydrofolate + ADP + phosphate. Its pathway is one-carbon metabolism; tetrahydrofolate interconversion. This is Formate--tetrahydrofolate ligase from Actinobacillus pleuropneumoniae serotype 5b (strain L20).